A 540-amino-acid polypeptide reads, in one-letter code: Zinc metalloproteinase nas-10 (540 aa).

The Peptidase M12A domain occupies 293 to 500; sequence ASIFFEQNLI…VEILNKMYCK (208 aa). 5 disulfides stabilise this stretch: Cys-339/Cys-499, Cys-365/Cys-385, Cys-504/Cys-540, Cys-511/Cys-533, and Cys-520/Cys-537. His-394 serves as a coordination point for Zn(2+). Glu-395 is an active-site residue. His-398 and His-404 together coordinate Zn(2+). Positions 504 to 540 constitute a ShKT domain; it reads CDDKNVYCGAWALQDLCNNPNHNVWMRSNCRKSCNFC.

It depends on Zn(2+) as a cofactor.

Metalloprotease. The polypeptide is Zinc metalloproteinase nas-10 (Caenorhabditis elegans).